Reading from the N-terminus, the 1012-residue chain is Ubiquitin-like modifier-activating enzyme 7 (1012 aa).

Residues 23–159 (GSPAMQRIQG…DTRGLVGQLF (137 aa)) form a 1-1 repeat. The 2 approximate repeats stretch occupies residues 23 to 575 (GSPAMQRIQG…GTWGSATVFM (553 aa)). Residue serine 266 is modified to Phosphoserine. One copy of the 1-2 repeat lies at 423–575 (GAGFQEKLRR…GTWGSATVFM (153 aa)). ATP is bound at residue 442–471 (AIGCELLKVFALVGLGAGNSGGLTVVDMDH). The Glycyl thioester intermediate role is filled by cysteine 599.

It belongs to the ubiquitin-activating E1 family. In terms of assembly, (Microbial infection) Interacts with human cytomegalovirus proteins NEC2/UL50 and UL26; these interactions inhibit ISGylation and cause proteasomal degradation of UBA7. As to quaternary structure, (Microbial infection) Interacts with rotavirus non-structural protein 5 (NSP5); this interaction promotes UBA7 proteasomal degradation. Monomer. Binds and is involved in the conjugation of G1P2/ISG15. In terms of processing, ISGylated. Ubiquitinated by RNF170. In terms of tissue distribution, expressed in a variety of normal and tumor cell types, but is reduced in lung cancer cell lines.

The protein localises to the cytoplasm. The protein resides in the nucleus. It participates in protein modification; protein ubiquitination. Its function is as follows. E1-activating enzyme that catalyzes the covalent conjugation of the ubiquitin-like protein product of ISG15 to additional interferon stimulated proteins (ISGs) as well as other cellular proteins such as P53 in a process termed protein ISGylation. Plays an essential role in antiviral immunity together with ISG15 by restricting the replication of many viruses including rabies virus, influenza virus, sindbis virus, rotavirus or human cytomegalovirus. For example, ISG15 modification of influenza A protein NS1 disrupts the association of the NS1 with importin-alpha leading to NS1 nuclear import inhibition. ISGylation of human cytomegalovirs protein UL26 regulates its stability and inhibits its activities to suppress NF-kappa-B signaling. This is Ubiquitin-like modifier-activating enzyme 7 from Homo sapiens (Human).